Consider the following 138-residue polypeptide: Beta-galactosidase (138 aa).

It belongs to the glycosyl hydrolase 2 family.

The catalysed reaction is Hydrolysis of terminal non-reducing beta-D-galactose residues in beta-D-galactosides.. The protein is Beta-galactosidase (lacZ) of Rhizobium radiobacter (Agrobacterium tumefaciens).